The sequence spans 468 residues: Adenosylhomocysteinase (468 aa).

The substrate site is built by Thr63, Asp139, and Glu164. NAD(+) is bound at residue Thr165–Thr167. Substrate-binding residues include Lys194 and Asp198. Residues Asn199, Gly228–Gly233, Glu251, Asn300, Ile321–His323, and Asn374 each bind NAD(+).

This sequence belongs to the adenosylhomocysteinase family. Requires NAD(+) as cofactor.

It is found in the cytoplasm. It carries out the reaction S-adenosyl-L-homocysteine + H2O = L-homocysteine + adenosine. The protein operates within amino-acid biosynthesis; L-homocysteine biosynthesis; L-homocysteine from S-adenosyl-L-homocysteine: step 1/1. May play a key role in the regulation of the intracellular concentration of adenosylhomocysteine. This Stutzerimonas stutzeri (strain A1501) (Pseudomonas stutzeri) protein is Adenosylhomocysteinase.